Reading from the N-terminus, the 655-residue chain is p-hydroxybenzoic acid efflux pump subunit AaeB (655 aa).

The next 11 membrane-spanning stretches (helical) occupy residues 13–33, 38–58, 69–89, 93–113, 121–141, 152–172, 370–390, 407–427, 431–451, 459–479, and 482–502; these read FAVK…HFQL, WAVL…GGEP, LRII…ISMI, LLMI…SSLV, WGLS…EPLL, EIVI…PRSI, LFWL…IAVV, FIYG…VIIP, QSML…GIEV, MGAL…TFHF, and FLDS…VILL.

This sequence belongs to the aromatic acid exporter ArAE (TC 2.A.85) family.

The protein resides in the cell inner membrane. Its function is as follows. Forms an efflux pump with AaeA. Could function as a metabolic relief valve, allowing to eliminate certain compounds when they accumulate to high levels in the cell. This Salmonella arizonae (strain ATCC BAA-731 / CDC346-86 / RSK2980) protein is p-hydroxybenzoic acid efflux pump subunit AaeB.